The following is a 733-amino-acid chain: Vinexin (733 aa).

Disordered stretches follow at residues Met-1 to Asp-51, Thr-129 to Lys-165, Ser-224 to Pro-285, and Glu-352 to Ala-448. Residues Asp-32–Leu-42 are compositionally biased toward basic and acidic residues. Residues Gln-147–Thr-157 are compositionally biased toward polar residues. The 69-residue stretch at Asp-164–Pro-232 folds into the SoHo domain. Composition is skewed to polar residues over residues Pro-245–Trp-256 and Arg-264–Gly-277. 2 positions are modified to phosphoserine: Ser-412 and Ser-459. 2 SH3 domains span residues Lys-444 to Ala-503 and Leu-518 to Glu-579. Residues Lys-444–Glu-579 form a binds to vinculin region. The disordered stretch occupies residues Leu-584–Thr-672. Ser-594 carries the post-translational modification Phosphoserine; by MAPK1. A compositionally biased stretch (low complexity) spans Pro-597–Pro-613. 3 positions are modified to phosphoserine: Ser-607, Ser-610, and Ser-624. The segment covering Glu-638–Pro-651 has biased composition (polar residues). The region spanning Ile-674–Val-733 is the SH3 3 domain. Residues Ile-674–Val-733 are binds to SOS.

In terms of assembly, interacts with vinculin by the first two SH3 domains and the proline rich region of vinculin. Binds to SOS (guanine nucleotide exchange factor of RAS and RAC), through its third SH3 domain. The formation of this complex is down-regulated by phosphorylation of SOS. Interacts with SAFB2, INPPL1/SHIP2 and SRCIN1. Interacts with DLG5 through its third SH3 domain. Interacts with SOCS7 and MAPK1/ERK2. Interacts with FASLG. Post-translationally, phosphorylated at Ser-594 by MAPK1/ERK2 during cell spreading.

Its subcellular location is the cell junction. It is found in the focal adhesion. The protein resides in the cytoplasm. It localises to the cytoskeleton. Promotes up-regulation of actin stress fiber formation. The chain is Vinexin (Sorbs3) from Mus musculus (Mouse).